The primary structure comprises 363 residues: Ribosomal RNA large subunit methyltransferase M (363 aa).

S-adenosyl-L-methionine contacts are provided by residues Ser-190, 223-226, Asp-242, Asp-262, and Asp-279; that span reads CPGG. Lys-308 functions as the Proton acceptor in the catalytic mechanism.

Belongs to the class I-like SAM-binding methyltransferase superfamily. RNA methyltransferase RlmE family. RlmM subfamily. In terms of assembly, monomer.

It localises to the cytoplasm. It catalyses the reaction cytidine(2498) in 23S rRNA + S-adenosyl-L-methionine = 2'-O-methylcytidine(2498) in 23S rRNA + S-adenosyl-L-homocysteine + H(+). Functionally, catalyzes the 2'-O-methylation at nucleotide C2498 in 23S rRNA. The polypeptide is Ribosomal RNA large subunit methyltransferase M (Vibrio vulnificus (strain CMCP6)).